We begin with the raw amino-acid sequence, 422 residues long: Probable glycosidase CRR1 (422 aa).

The first 20 residues, 1–20 (MRISILQLVPVVGYIGFALG), serve as a signal peptide directing secretion. The 273-residue stretch at 67–339 (DEESCAPIPA…WENSPDIIEK (273 aa)) folds into the GH16 domain. Glu217 (nucleophile) is an active-site residue. The active-site Proton donor is the Glu221.

The protein belongs to the glycosyl hydrolase 16 family. CRR1 subfamily.

It is found in the spore wall. In terms of biological role, spore specific glycosidase involved in spore wall assembly during sporulation. May be involved in copper import. This chain is Probable glycosidase CRR1 (CRR1), found in Saccharomyces cerevisiae (strain ATCC 204508 / S288c) (Baker's yeast).